Reading from the N-terminus, the 1335-residue chain is Restriction of telomere capping protein 1 (1335 aa).

Residues 1 to 39 form a disordered region; that stretch reads MSLSPHVENASIPKGSTPIPKNRNVSSIGKGEFLGSSSS. WD repeat units follow at residues 207–248, 256–296, 305–342, 367–406, 439–486, and 489–527; these read NKFS…SIDN, EHTR…SKSS, TASDSIRDVKWMPGYNFASKNDQGSSTYGNLKSGYKFA, AHTGPGLCLNWHPNQEYIATGGRDGKCCLWFVGDNANAAE, NTGY…IPKH, and LSETPSLGLVWWDENLIFNIDKGTRINGWDINKEPTVLE. Disordered regions lie at residues 559–593, 600–619, 630–651, 736–758, and 783–824; these read PELQPTSSTTCKKHPGTIKNPKNGNPENQGIIGGI, TGLTSFTPERPPTLKAGPTF, ASSFNSSSASLTSLTPQTENRE, KNATETHGDNTTTTNNNDDDDDD, and NEKV…DRSR. Residues 630–644 show a composition bias toward low complexity; it reads ASSFNSSSASLTSLT. Residues 808 to 817 show a composition bias toward low complexity; the sequence is SSISSISASR. The WD 7 repeat unit spans residues 844 to 884; that stretch reads LISIATHNASVYLSIDDLTNFKIWILIRDSLLWDLKWMTSS. Disordered stretches follow at residues 935–956 and 1007–1037; these read AFRANSDEPSDAEKKPVSKLKE and DEHEHQEEEQPHDSPTKSAQFHASPIAKSIP. Composition is skewed to basic and acidic residues over residues 945-956 and 1009-1021; these read DAEKKPVSKLKE and HEHQEEEQPHDSP. A phosphoserine mark is found at serine 1030, serine 1074, serine 1081, serine 1083, serine 1117, and serine 1127. WD repeat units lie at residues 1130 to 1170 and 1217 to 1256; these read REQL…TETG and VLKYCPFEDIMGSEGDQSSIRLFCERCGELITNESSKEKL. The segment at 1294–1335 adopts an RING-type; degenerate zinc-finger fold; the sequence is LKKLTMVILPCGHEGHFQCIQEWFLDENEQECPGGCPGVAFI.

This sequence belongs to the WD repeat RTC1 family.

The protein localises to the vacuole. Functionally, may be involved in a process influencing telomere capping. The polypeptide is Restriction of telomere capping protein 1 (RTC1) (Saccharomyces cerevisiae (strain YJM789) (Baker's yeast)).